The sequence spans 340 residues: Cytochrome P450 monooxygenase cheG (340 aa).

Asparagine 25 carries N-linked (GlcNAc...) asparagine glycosylation. A helical transmembrane segment spans residues 37–57; that stretch reads MLLGIPTVILSLTPAVLRLLI. Cysteine 283 contacts heme. Residues 308–340 form a disordered region; sequence LPPGQGKPEKGSMPNGSMSPDTKAKVLFRSRKL. Asparagine 322 carries an N-linked (GlcNAc...) asparagine glycan.

This sequence belongs to the cytochrome P450 family. It depends on heme as a cofactor.

Its subcellular location is the membrane. Its pathway is secondary metabolite biosynthesis. Cytochrome P450 monooxygenase; part of the gene cluster that mediates the biosynthesis of chaetoglobosin A which has a unique inhibitory activity against actin polymerization in mammalian cells. Chaetoglobosin A and its intermediates are involved in the morphological differentiation of C.globosum. The first step of the pathway is the synthesis of prochaetoglobosin I via condensation of one acetyl-CoA, 8 malonyl-CoA, and a L-tryptophan molecule by the PKS-NRPS hybrid synthetase cheA, followed by reduction of backbone double bond to install desired geometry by the enoyl reductase cheB. Further multiple oxidation steps performed by the cytochrome P450 monooxygenases cheE and cheG, as well as by the FAD-linked oxidoreductase cheF, lead to the formation of chaetoglobosin A. Depending on the order of action of these reductases, distinct intermediates can be identified. Within the pathway, the cytochrome P450 monooxygenase cheE catalyzes a stereospecific epoxidation on prochaetoglobosin I, cytoglobosin D, and chaetoglobosin J intermediates. The FAD-linked oxidoreductase cheF performs dehydrogenation of the C-20 hydroxyl groups in the 20-dihyrochaetoglobosin A and cytoglobosin D intermediates. Finally, the cytochrome P450 monooxygenase cheG can catalyze the stereospecific dihydroxylation of prochaetoglobosin I and prochaetoglobosin IV at C-19 and C-20, respectively. The Diels-Alderase cheD may play a role in the post-PKS-NRPS biosynthetic steps catalyzing Diels-Alder cyclization. In Chaetomium globosum (strain ATCC 6205 / CBS 148.51 / DSM 1962 / NBRC 6347 / NRRL 1970) (Soil fungus), this protein is Cytochrome P450 monooxygenase cheG.